The primary structure comprises 962 residues: Protease 3 (962 aa).

The first 23 residues, 1–23 (MPRSIWFKALLLFVALWAPLSQA), serve as a signal peptide directing secretion. Zn(2+) is bound at residue His88. The active-site Proton acceptor is Glu91. The Zn(2+) site is built by His92 and Glu169.

Belongs to the peptidase M16 family. In terms of assembly, monomer. Zn(2+) serves as cofactor.

The protein localises to the periplasm. The catalysed reaction is Preferential cleavage of 16-Tyr-|-Leu-17 and 25-Phe-|-Tyr-26 bonds of oxidized insulin B chain. Also acts on other substrates of Mw less than 7 kDa such as insulin and glucagon.. In terms of biological role, endopeptidase that degrades small peptides of less than 7 kDa, such as glucagon and insulin. This Escherichia coli O6:H1 (strain CFT073 / ATCC 700928 / UPEC) protein is Protease 3 (ptrA).